The sequence spans 167 residues: Gametocyte-specific factor 1 (167 aa).

Ser8 is subject to Phosphoserine. CHHC U11-48K-type zinc fingers lie at residues 14 to 41 and 48 to 75; these read LLQC…RKNH and LATC…DDKS. Zn(2+) is bound by residues Cys17, His23, His33, Cys37, Cys51, His57, His67, and Cys71.

This sequence belongs to the UPF0224 (FAM112) family. In terms of tissue distribution, expressed abundantly in adult testis, at moderate levels in unfertilized eggs and ovaries and weakly in embryonic stem cells.

It localises to the cytoplasm. In terms of biological role, required for spermatogenesis and is involved in the suppression of retrotransposon transcription in male germ cells. This Mus musculus (Mouse) protein is Gametocyte-specific factor 1.